Here is a 333-residue protein sequence, read N- to C-terminus: 4-hydroxy-2-oxovalerate aldolase (333 aa).

A Pyruvate carboxyltransferase domain is found at 4–254 (VKIFDLTLRD…DCGIDLYKTM (251 aa)). Position 12-13 (12-13 (RD)) interacts with substrate. Position 13 (Asp-13) interacts with Mn(2+). His-16 (proton acceptor) is an active-site residue. His-193 is a binding site for substrate. 2 residues coordinate Mn(2+): His-193 and His-195. Tyr-284 contributes to the substrate binding site.

It belongs to the 4-hydroxy-2-oxovalerate aldolase family.

It carries out the reaction (S)-4-hydroxy-2-oxopentanoate = acetaldehyde + pyruvate. This chain is 4-hydroxy-2-oxovalerate aldolase, found in Desulfitobacterium hafniense (strain DSM 10664 / DCB-2).